A 210-amino-acid polypeptide reads, in one-letter code: Large ribosomal subunit protein bL25 (210 aa).

The protein belongs to the bacterial ribosomal protein bL25 family. CTC subfamily. Part of the 50S ribosomal subunit; part of the 5S rRNA/L5/L18/L25 subcomplex. Contacts the 5S rRNA. Binds to the 5S rRNA independently of L5 and L18.

Its function is as follows. This is one of the proteins that binds to the 5S RNA in the ribosome where it forms part of the central protuberance. This is Large ribosomal subunit protein bL25 from Herminiimonas arsenicoxydans.